The chain runs to 995 residues: UPF0182 protein MUL_2505 (995 aa).

The next 7 helical transmembrane spans lie at 18–38 (VLILIALGVIALLLAGPRLID), 63–83 (FLVFLVAGVLVGGIVFAGLAL), 113–133 (LFGIGIPAAIGLLAGIVAQSY), 175–195 (FVAIFLAFVANVVSHYLFGGI), 210–230 (IQLVSLVGVLVLLKTVAYWLN), 259–279 (KLILMAIAVICAAAVFSAIVL), and 287–307 (IGLVLLLLSSLIVGAAWPMIV). The disordered stretch occupies residues 900-947 (AATGIQPTEGGAPANVPPNNAPSPEALPGTPPSPPTAVPPAPEASVTL). The segment covering 928–941 (GTPPSPPTAVPPAP) has biased composition (pro residues).

Belongs to the UPF0182 family.

Its subcellular location is the cell membrane. The polypeptide is UPF0182 protein MUL_2505 (Mycobacterium ulcerans (strain Agy99)).